Consider the following 141-residue polypeptide: Large ribosomal subunit protein uL11 (141 aa).

This sequence belongs to the universal ribosomal protein uL11 family. As to quaternary structure, part of the ribosomal stalk of the 50S ribosomal subunit. Interacts with L10 and the large rRNA to form the base of the stalk. L10 forms an elongated spine to which L12 dimers bind in a sequential fashion forming a multimeric L10(L12)X complex. In terms of processing, one or more lysine residues are methylated.

Functionally, forms part of the ribosomal stalk which helps the ribosome interact with GTP-bound translation factors. In Trichodesmium erythraeum (strain IMS101), this protein is Large ribosomal subunit protein uL11.